The following is a 3598-amino-acid chain: Dystrophin, isoforms A/C/F/G/H (3598 aa).

The segment at 1–230 (MEPGILIDER…YVMCLYHAME (230 aa)) is actin-binding. 2 consecutive Calponin-homology (CH) domains span residues 12–116 (HIQK…LEFN) and 127–230 (NGVE…HAME). Positions 233 to 297 (RTRQQEQEQD…SGELKTHSMR (65 aa)) are disordered. Polar residues predominate over residues 267–286 (NDQTSLGLYTSDSAGSMEQR). Spectrin repeat units lie at residues 307–420 (VEIS…KILM), 423–525 (AEFQ…KLQQ), 851–963 (QDFG…AIEN), 1056–1170 (SHID…LLEH), 1173–1275 (TQLG…LLEQ), and 1381–1483 (SYES…TLER). Disordered stretches follow at residues 1633-1696 (ARNT…VMPD), 1716-1742 (SLNP…SSPA), 1799-1854 (EDSD…ENTS), 1878-1941 (RDIL…EPLV), and 2204-2233 (GPRI…NEPS). Residues 1663–1679 (SGESPSSAHTSSSESPT) are compositionally biased toward low complexity. The segment covering 1803-1816 (SSVRVDSQGKEMRR) has biased composition (basic and acidic residues). Phosphoserine is present on residues serine 1832 and serine 1838. Residues 1834–1843 (NDEDSAEQEE) are compositionally biased toward acidic residues. A compositionally biased stretch (basic and acidic residues) spans 1878 to 1893 (RDILRDSEEEEPKTPD). Polar residues predominate over residues 2218–2233 (SAATMSCRSEYNNEPS). Spectrin repeat units follow at residues 2237-2363 (ALAG…QLKN), 2366-2472 (SDSQ…QLHA), 2475-2576 (HSLQ…RLES), 2579-2712 (EHWN…RLDE), and 2715-2819 (TKMR…VLCQ). The segment at 2655-2679 (VSDTSDTEANHDSDSRYMSAEEQSR) is disordered. Residues 2822 to 2852 (AQQTHENGDDGRTTSNSGTIGPLPNLGQSVK) form a disordered region. Positions 2849–2882 (QSVKPPWERATTAANVPYYIDHERETTHWDHPEM) constitute a WW domain. Residues 3107–3163 (KHQAKCNICKEYPIVGFRYRCLKCFNFDMCQKCFFFGRNAKNHKLTHPMHEYCTTTT) form a ZZ-type zinc finger. Positions 3112, 3115, 3127, 3130, 3136, 3139, 3149, and 3153 each coordinate Zn(2+). Serine 3207 carries the phosphoserine modification. Disordered regions lie at residues 3316–3344 (EQSG…GEQG), 3387–3449 (DEPN…KGIM), 3483–3545 (LHQQ…QQHL), and 3560–3598 (ELES…ELQK). Polar residues-rich tracts occupy residues 3325–3337 (NGMQ…MTGL) and 3408–3439 (ALNS…QQNG). Residues 3485 to 3499 (QQQQQQLQQQPPQQQ) are compositionally biased toward low complexity. Residues 3505–3523 (GNGGMDISGGMQTSGGYLG) show a composition bias toward gly residues. Low complexity predominate over residues 3534–3545 (SSLMQQQHQQHL). A compositionally biased stretch (acidic residues) spans 3560-3570 (ELESINDDLED). A compositionally biased stretch (low complexity) spans 3571–3589 (SSSSNTTNTTTTTTTTATT).

As to quaternary structure, component of the dystrophin associated protein complex (DAPC). Interacts with Dg, via the Dg WW domain binding sites. As to expression, isoform A, isoform F and isoform G are expressed in the midgut endoderm of stage 12 embryos. In stage 16 embryos, expression is also seen in the pericardial cells, cells at the ectoderm segmental border and cells along the midline of the CNS. During embryogenesis, isoform A is also expressed in the visceral mesoderm, muscle attachment sites, mesectodermal cells at the midline, the gut, and throughout muscle fibers. In larvae, isoform A is found in all muscle fibers, but not detectable in the brain or neuropil.

The protein localises to the cell membrane. Its subcellular location is the sarcolemma. It localises to the cytoplasm. It is found in the cytoskeleton. Required for the maintenance of appropriate synaptic retrograde communication and the stabilization of muscle cell architecture or physiology. Both det and Dg are required for maintenance of early dpp signaling in the presumptive crossvein. Isoform A is not required to maintain muscle integrity, but plays a role in neuromuscular homeostasis by regulating neurotransmitter release. May play a role in anchoring the cytoskeleton to the plasma membrane. The polypeptide is Dystrophin, isoforms A/C/F/G/H (Dys) (Drosophila melanogaster (Fruit fly)).